The sequence spans 430 residues: MISKSIILRFSELSMRKKATLVGLPLLAVAAISSSLNSPTRQQRIELSLPESPLVQFSSAEHTVEVVKVGHPDYEYEIKPGDNLSTIFNQLGFAYTELMKVMETDLNYLALDTLRPGNVLRFWKGSDNTLAKMELEFSLVDRAVYTRLNDGSYEFEERKIPGTWKVEPLIGEVDGSFSLSANRAGLGAADVDQIVTLLKDKINFGRDLRRGDRFEVVLSRQLVGEKLTGNSEIQAIKIFNRGKEITAYLHQDGQYYDKNGDSLQRAFQRYPVDSKWRISSNFDPRRLHPVTKRVAPHNGTDFAMPIGTPVYTSGDGVVVMTRNHPYAGNYVVIQHGNTYMTRYLHLSKILVKKGQKVSRGQRIGLSGNTGRVTGPHLHYELIVRGRPVNAMKANIPMASSVPKKEMAQFIAKRKELDQMLARQESMLAAQ.

A signal peptide spans M1–S35. Zn(2+) contacts are provided by H297, D301, and H378.

Belongs to the peptidase M23B family. Requires Zn(2+) as cofactor.

The protein resides in the periplasm. It functions in the pathway cell wall degradation; peptidoglycan degradation. Reduced activity in 0.5 mM EDTA and a complete loss of activity at higher EDTA concentrations. The effect of EDTA can be reversed by addition of 1 mM ZnCl(2). Conformational switching between open (catalytically active) and closed (catalytically inactive) conformation of this protein is suggested mechanism of its regulation. The signal or inducer of the conformational shift to the open form unmasking the active site is currently not understood. Functionally, cell wall peptidoglycan (PG) DD-endopeptidase essential for cell growth and elongation. Hydrolyzes peptide cross-links which covalently connect adjacent PG strands probably to allow insertion of new glycans and thus cell wall expansion. Degrades purified whole PG sacculi in vitro. Releases predominantly short glycan chains from the PG. Cleaves D,D cross-linked muropeptides specifically preferring dimeric tetrapeptide-tetrapeptide (D44) substrates and has only little activity on dimeric tetrapeptide-pentapeptide (D45) substrates. Also converts more than 50% of tetrapeptide-tripeptide (D43) to product as well as more than 50% of D43M, which contains D-Met instead of D-Ala in the fourth position of the acceptor moiety. Cleaves the D,D bond between diaminopimelic acid (DAP) and D-Ala of the PG substrate in vitro. No cleavage of L,D bond connecting two DAP moieties. The polypeptide is Peptidoglycan DD-endopeptidase ShyA (Vibrio cholerae serotype O1 (strain ATCC 39315 / El Tor Inaba N16961)).